Consider the following 411-residue polypeptide: RING-H2 finger protein ATL65 (411 aa).

The interval Met-1–Ser-32 is disordered. A compositionally biased stretch (low complexity) spans Ser-10–Ser-21. A helical membrane pass occupies residues Leu-36 to Val-56. Residues Cys-156–Arg-198 form an RING-type; atypical zinc finger.

Belongs to the RING-type zinc finger family. ATL subfamily.

It localises to the membrane. It catalyses the reaction S-ubiquitinyl-[E2 ubiquitin-conjugating enzyme]-L-cysteine + [acceptor protein]-L-lysine = [E2 ubiquitin-conjugating enzyme]-L-cysteine + N(6)-ubiquitinyl-[acceptor protein]-L-lysine.. Its pathway is protein modification; protein ubiquitination. The protein is RING-H2 finger protein ATL65 (ATL65) of Arabidopsis thaliana (Mouse-ear cress).